The primary structure comprises 291 residues: 4-hydroxy-tetrahydrodipicolinate synthase (291 aa).

Position 44 (threonine 44) interacts with pyruvate. The Proton donor/acceptor role is filled by tyrosine 132. The Schiff-base intermediate with substrate role is filled by lysine 160. Isoleucine 202 contributes to the pyruvate binding site.

This sequence belongs to the DapA family. In terms of assembly, homotetramer; dimer of dimers.

It localises to the cytoplasm. The enzyme catalyses L-aspartate 4-semialdehyde + pyruvate = (2S,4S)-4-hydroxy-2,3,4,5-tetrahydrodipicolinate + H2O + H(+). The protein operates within amino-acid biosynthesis; L-lysine biosynthesis via DAP pathway; (S)-tetrahydrodipicolinate from L-aspartate: step 3/4. In terms of biological role, catalyzes the condensation of (S)-aspartate-beta-semialdehyde [(S)-ASA] and pyruvate to 4-hydroxy-tetrahydrodipicolinate (HTPA). The chain is 4-hydroxy-tetrahydrodipicolinate synthase from Thermodesulfovibrio yellowstonii (strain ATCC 51303 / DSM 11347 / YP87).